Here is a 773-residue protein sequence, read N- to C-terminus: Serine/threonine-protein kinase CBK1 (773 aa).

Composition is skewed to polar residues over residues 50–59 (LHDQYSSHME) and 178–217 (GNYN…SPQR). Disordered stretches follow at residues 50-111 (LHDQ…GGNI) and 177-275 (NGNY…QQQQ). Low complexity-rich tracts occupy residues 218–256 (QPAQ…QQQP) and 265–275 (QQTQLQQQQQQ). Residues 370-686 (FHTVQVIGKG…ADEIKSHPFF (317 aa)) form the Protein kinase domain. ATP is bound by residues 376-384 (IGKGAFGEV) and Lys399. Asp493 (proton acceptor) is an active-site residue. Positions 687 to 771 (RGVDWNTIRQ…SRFDYLTRKN (85 aa)) constitute an AGC-kinase C-terminal domain.

The protein belongs to the protein kinase superfamily. STE Ser/Thr protein kinase family. COT1 subfamily.

The catalysed reaction is L-seryl-[protein] + ATP = O-phospho-L-seryl-[protein] + ADP + H(+). The enzyme catalyses L-threonyl-[protein] + ATP = O-phospho-L-threonyl-[protein] + ADP + H(+). In terms of biological role, protein kinase that seems to play a role in the regulation of cell morphogenesis and proliferation. The chain is Serine/threonine-protein kinase CBK1 (CBK1) from Candida glabrata (strain ATCC 2001 / BCRC 20586 / JCM 3761 / NBRC 0622 / NRRL Y-65 / CBS 138) (Yeast).